Consider the following 436-residue polypeptide: Phosphate-repressible acid phosphatase (436 aa).

An N-terminal signal peptide occupies residues 1 to 20 (MKGTAASALLIALSATAAQA). 3 N-linked (GlcNAc...) asparagine glycosylation sites follow: Asn-227, Asn-283, and Asn-304.

As to quaternary structure, monomer.

The enzyme catalyses a phosphate monoester + H2O = an alcohol + phosphate. The polypeptide is Phosphate-repressible acid phosphatase (pacA) (Aspergillus niger).